The primary structure comprises 585 residues: Cytochrome c lysine N-methyltransferase 1 (585 aa).

The 256-residue stretch at 18 to 273 folds into the SET domain; that stretch reads KSLSLKPSTI…KPIEVFISYS (256 aa). The tract at residues 186–288 is SET-like; the sequence is LNLSDIKHLY…FSMLVTYGFT (103 aa).

The protein belongs to the class V-like SAM-binding methyltransferase superfamily.

Its subcellular location is the cytoplasm. The protein localises to the cytosol. The enzyme catalyses L-lysyl-[cytochrome c] + S-adenosyl-L-methionine = N(6)-methyl-L-lysyl-[cytochrome c] + S-adenosyl-L-homocysteine + H(+). Methyltransferase which mediates trimethylation of 'Lys-78' of cytochrome c (CYC1). The polypeptide is Cytochrome c lysine N-methyltransferase 1 (CTM1) (Saccharomyces cerevisiae (strain ATCC 204508 / S288c) (Baker's yeast)).